Here is a 90-residue protein sequence, read N- to C-terminus: uncharacterized protein (90 aa).

The interval 13-34 is disordered; sequence APEGMGPHHAASSSHHSAQHHH. The helical transmembrane segment at 52-72 threads the bilayer; it reads YKMWFLYALILALIFGVFMWW.

The protein resides in the host membrane. This is an uncharacterized protein from Invertebrate iridescent virus 3 (IIV-3).